A 338-amino-acid polypeptide reads, in one-letter code: Heat-inducible transcription repressor HrcA (338 aa).

Belongs to the HrcA family.

In terms of biological role, negative regulator of class I heat shock genes (grpE-dnaK-dnaJ and groELS operons). Prevents heat-shock induction of these operons. The polypeptide is Heat-inducible transcription repressor HrcA (Bacillus anthracis (strain A0248)).